Reading from the N-terminus, the 786-residue chain is Endonuclease MutS2 (786 aa).

334–341 (GPNTGGKT) lines the ATP pocket. One can recognise a Smr domain in the interval 711–786 (LDLRGERYEN…GNGATVVYFK (76 aa)).

This sequence belongs to the DNA mismatch repair MutS family. MutS2 subfamily. Homodimer. Binds to stalled ribosomes, contacting rRNA.

Functionally, endonuclease that is involved in the suppression of homologous recombination and thus may have a key role in the control of bacterial genetic diversity. Its function is as follows. Acts as a ribosome collision sensor, splitting the ribosome into its 2 subunits. Detects stalled/collided 70S ribosomes which it binds and splits by an ATP-hydrolysis driven conformational change. Acts upstream of the ribosome quality control system (RQC), a ribosome-associated complex that mediates the extraction of incompletely synthesized nascent chains from stalled ribosomes and their subsequent degradation. Probably generates substrates for RQC. The chain is Endonuclease MutS2 from Ligilactobacillus salivarius (strain UCC118) (Lactobacillus salivarius).